The following is a 386-amino-acid chain: WD repeat-containing protein 89 (386 aa).

6 WD repeats span residues 21–65, 68–106, 111–155, 167–207, 213–253, and 318–357; these read KEPT…VIRE, GYPG…GKPV, GYPS…QDLS, THSD…EDDA, NSVS…TDEP, and GHAA…KTFT.

The chain is WD repeat-containing protein 89 (WDR89) from Bos taurus (Bovine).